Reading from the N-terminus, the 365-residue chain is Sulfotransferase 2B1 (365 aa).

70–75 (KSGTTW) is a 3'-phosphoadenylyl sulfate binding site. Positions 98, 103, and 125 each coordinate substrate. The active-site Proton acceptor is H125. 3'-phosphoadenylyl sulfate contacts are provided by residues R147, S155, Y210, 244-249 (STFSAM), and 274-276 (RKG). Residues 303-365 (GMPTFPWDED…ASETPHPRPS (63 aa)) are disordered. Acidic residues predominate over residues 309 to 325 (WDEDPEEDGSPDPEPSP). S348 carries the phosphoserine modification.

This sequence belongs to the sulfotransferase 1 family. Phosphorylated. As to expression, expressed in the stratum granulosum-stratum corneum junction in the skin (at protein level). Expressed highly in placenta, prostate and trachea and lower expression in the small intestine and lung.

The protein localises to the cytoplasm. The protein resides in the cytosol. It localises to the microsome. Its subcellular location is the nucleus. The catalysed reaction is an alcohol + 3'-phosphoadenylyl sulfate = an alkyl sulfate + adenosine 3',5'-bisphosphate + H(+). It catalyses the reaction 3beta-hydroxyandrost-5-en-17-one + 3'-phosphoadenylyl sulfate = dehydroepiandrosterone 3-sulfate + adenosine 3',5'-bisphosphate + H(+). It carries out the reaction (24S)-hydroxycholesterol + 3'-phosphoadenylyl sulfate = (24S)-hydroxycholesterol 3-sulfate + adenosine 3',5'-bisphosphate + H(+). The enzyme catalyses cholesterol + 3'-phosphoadenylyl sulfate = cholesterol sulfate + adenosine 3',5'-bisphosphate + H(+). The catalysed reaction is pregnenolone + 3'-phosphoadenylyl sulfate = pregnenolone sulfate + adenosine 3',5'-bisphosphate + H(+). Sulfotransferase that utilizes 3'-phospho-5'-adenylyl sulfate (PAPS) as sulfonate donor to catalyze the sulfate conjugation. Responsible for the sulfation of cholesterol. Catalyzes sulfation of the 3beta-hydroxyl groups of steroids, such as, pregnenolone and dehydroepiandrosterone (DHEA). Preferentially sulfonates cholesterol, while it also has significant activity with pregnenolone and DHEA. Plays a role in epidermal cholesterol metabolism and in the regulation of epidermal proliferation and differentiation. Its function is as follows. Sulfonates pregnenolone but not cholesterol. The protein is Sulfotransferase 2B1 (SULT2B1) of Homo sapiens (Human).